A 332-amino-acid polypeptide reads, in one-letter code: Phenylalanine--tRNA ligase alpha subunit (332 aa).

Mg(2+) is bound at residue glutamate 254.

This sequence belongs to the class-II aminoacyl-tRNA synthetase family. Phe-tRNA synthetase alpha subunit type 1 subfamily. As to quaternary structure, tetramer of two alpha and two beta subunits. The cofactor is Mg(2+).

Its subcellular location is the cytoplasm. It catalyses the reaction tRNA(Phe) + L-phenylalanine + ATP = L-phenylalanyl-tRNA(Phe) + AMP + diphosphate + H(+). The sequence is that of Phenylalanine--tRNA ligase alpha subunit from Hydrogenovibrio crunogenus (strain DSM 25203 / XCL-2) (Thiomicrospira crunogena).